A 307-amino-acid chain; its full sequence is Peroxisomal membrane protein PMP34 (307 aa).

Topologically, residues 1-9 are cytoplasmic; sequence MASVLSYES. The interval 1–147 is necessary for targeting to peroxisomes and interaction with PEX19; it reads MASVLSYESL…NEDIIPTNYK (147 aa). 3 Solcar repeats span residues 7 to 92, 99 to 192, and 200 to 294; these read YESL…LKAV, SSTG…LKRQ, and LSSL…LTAA. Residues 10–30 form a helical membrane-spanning segment; it reads LVHAVAGAVGSVTAMTVFFPL. Residues 31-66 lie on the Lumenal side of the membrane; sequence DTARLRLQVDEKRKSKTTHAVLLEIIKEEGLLAPYR. The chain crosses the membrane as a helical span at residues 67–87; the sequence is GWFPVISSLCCSNFVYFYTFN. Residues 88 to 104 lie on the Cytoplasmic side of the membrane; it reads SLKAVWVKGQRSSTGKD. A helical transmembrane segment spans residues 105–125; sequence LVVGFVAGVVNVLLTTPLWVV. Residues 126 to 160 are Lumenal-facing; sequence NTRLKLQGAKFRNEDIIPTNYKGIIDAFHQIIRDE. Residues 161–181 form a helical membrane-spanning segment; that stretch reads GILALWNGTFPSLLLVFNPAI. The Cytoplasmic portion of the chain corresponds to 182–202; sequence QFMFYEGLKRQLLKKRMKLSS. The short motif at 190 to 199 is the Peroxisome localization signal element; that stretch reads KRQLLKKRMK. Residues 203–223 traverse the membrane as a helical segment; that stretch reads LDVFIIGAIAKAIATTVTYPM. At 224 to 280 the chain is on the lumenal side; the sequence is QTVQSILRFGRHRLNPENRTLGSLRNVLSLLHQRVKRFGIMGLYKGLEAKLLQTVLT. A necessary for targeting to peroxisomes and interaction with PEX19 region spans residues 244–307; that stretch reads LGSLRNVLSL…VMGLKSTHKH (64 aa). The chain crosses the membrane as a helical span at residues 281-301; sequence AALMFLVYEKLTAATFTVMGL. Residues 302–307 are Cytoplasmic-facing; it reads KSTHKH.

Belongs to the mitochondrial carrier (TC 2.A.29) family. As to quaternary structure, interacts (via N- and C-terminus peroxisomal targeting regions) with PEX19; the interaction occurs with the newly synthesized SLC25A17 in the cytosol. In terms of tissue distribution, expressed in liver, kidney, heart, spleen, muscle and lung.

Its subcellular location is the cytoplasm. The protein localises to the peroxisome membrane. The catalysed reaction is AMP(out) + CoA(in) = AMP(in) + CoA(out). The enzyme catalyses 3'-dephospho-CoA(in) + AMP(out) = 3'-dephospho-CoA(out) + AMP(in). It carries out the reaction acetyl-CoA(in) + AMP(out) = acetyl-CoA(out) + AMP(in). It catalyses the reaction AMP(in) + NAD(+)(out) = AMP(out) + NAD(+)(in). The catalysed reaction is FAD(in) + AMP(out) = FAD(out) + AMP(in). The enzyme catalyses FMN(in) + AMP(out) = FMN(out) + AMP(in). It carries out the reaction AMP(in) + ADP(out) = AMP(out) + ADP(in). It catalyses the reaction adenosine 3',5'-bisphosphate(in) + AMP(out) = adenosine 3',5'-bisphosphate(out) + AMP(in). The catalysed reaction is FAD(in) + CoA(out) = FAD(out) + CoA(in). The enzyme catalyses FAD(in) + adenosine 3',5'-bisphosphate(out) = FAD(out) + adenosine 3',5'-bisphosphate(in). It carries out the reaction FMN(in) + CoA(out) = FMN(out) + CoA(in). It catalyses the reaction FMN(in) + adenosine 3',5'-bisphosphate(out) = FMN(out) + adenosine 3',5'-bisphosphate(in). The catalysed reaction is FAD(out) + NAD(+)(in) = FAD(in) + NAD(+)(out). The enzyme catalyses FMN(out) + NAD(+)(in) = FMN(in) + NAD(+)(out). It carries out the reaction NAD(+)(in) + CoA(out) = NAD(+)(out) + CoA(in). It catalyses the reaction adenosine 3',5'-bisphosphate(out) + NAD(+)(in) = adenosine 3',5'-bisphosphate(in) + NAD(+)(out). The catalysed reaction is FMN(out) + ADP(in) = FMN(in) + ADP(out). The enzyme catalyses FAD(out) + ADP(in) = FAD(in) + ADP(out). It carries out the reaction ADP(out) + CoA(in) = ADP(in) + CoA(out). It catalyses the reaction adenosine 3',5'-bisphosphate(in) + ADP(out) = adenosine 3',5'-bisphosphate(out) + ADP(in). Its function is as follows. Peroxisomal transporter for multiple cofactors like coenzyme A (CoA), flavin adenine dinucleotide (FAD), flavin mononucleotide (FMN) and nucleotide adenosine monophosphate (AMP), and to a lesser extent for nicotinamide adenine dinucleotide (NAD(+)), adenosine diphosphate (ADP) and adenosine 3',5'-diphosphate (PAP). May catalyze the transport of free CoA, FAD and NAD(+) from the cytosol into the peroxisomal matrix by a counter-exchange mechanism. This chain is Peroxisomal membrane protein PMP34 (Slc25a17), found in Mus musculus (Mouse).